The sequence spans 557 residues: Potassium-transporting ATPase potassium-binding subunit (557 aa).

A run of 12 helical transmembrane segments spans residues 5-25 (GFLL…PLGS), 63-83 (LSAI…MLLG), 132-152 (GLTV…FALI), 170-190 (LLRI…LFFI), 253-273 (FVQM…FGEV), 283-303 (LLWA…WAEV), 329-349 (VLVS…AVIA), 356-376 (ALGG…FGGV), 379-399 (GLYG…LMIG), 416-436 (LTAL…ALAM), 484-504 (LLAF…MAIA), and 526-546 (LFVG…FIPA).

This sequence belongs to the KdpA family. In terms of assembly, the system is composed of three essential subunits: KdpA, KdpB and KdpC.

The protein localises to the cell inner membrane. In terms of biological role, part of the high-affinity ATP-driven potassium transport (or Kdp) system, which catalyzes the hydrolysis of ATP coupled with the electrogenic transport of potassium into the cytoplasm. This subunit binds the periplasmic potassium ions and delivers the ions to the membrane domain of KdpB through an intramembrane tunnel. In Escherichia fergusonii (strain ATCC 35469 / DSM 13698 / CCUG 18766 / IAM 14443 / JCM 21226 / LMG 7866 / NBRC 102419 / NCTC 12128 / CDC 0568-73), this protein is Potassium-transporting ATPase potassium-binding subunit.